The chain runs to 821 residues: Xylosyltransferase 1 (821 aa).

The disordered stretch occupies residues 1–121; it reads YFSHRPKEKV…PETKSDQVPK (121 aa). Residues 1 to 821 are Lumenal-facing; that stretch reads YFSHRPKEKV…GAVKPDGRLR (821 aa). A compositionally biased stretch (basic and acidic residues) spans 9–25; that stretch reads KVRTDSNNENSVPKDFE. Residues 27–36 show a composition bias toward polar residues; that stretch reads VDNSNFAPRT. 2 stretches are compositionally biased toward basic and acidic residues: residues 41–58 and 76–87; these read HQPE…ERLQ and GPKEVLPPREKA. An N-linked (GlcNAc...) asparagine glycan is attached at Asn-90. 4 disulfides stabilise this stretch: Cys-122–Cys-150, Cys-166–Cys-407, Cys-426–Cys-439, and Cys-428–Cys-437. UDP-alpha-D-xylose contacts are provided by residues Val-198, Asp-226, and 255-257; that span reads TIW. N-linked (GlcNAc...) asparagine glycosylation occurs at Asn-286. 359-360 lines the UDP-alpha-D-xylose pocket; that stretch reads DW. UDP-alpha-D-xylose contacts are provided by residues Ser-440 and 463-464; that span reads RK. Intrachain disulfides connect Cys-540/Cys-789 and Cys-782/Cys-795. N-linked (GlcNAc...) asparagine glycosylation occurs at Asn-642. The tract at residues 801-821 is disordered; it reads SSFSPDPKSELGAVKPDGRLR.

It belongs to the glycosyltransferase 14 family. XylT subfamily. As to quaternary structure, monomer. A divalent metal cation is required as a cofactor. In terms of processing, contains 7 disulfide bonds. N-glycosylated.

Its subcellular location is the golgi apparatus membrane. The enzyme catalyses UDP-alpha-D-xylose + L-seryl-[protein] = 3-O-(beta-D-xylosyl)-L-seryl-[protein] + UDP + H(+). Its pathway is glycan metabolism; chondroitin sulfate biosynthesis. It participates in glycan metabolism; heparan sulfate biosynthesis. Its function is as follows. Catalyzes the first step in the biosynthesis of chondroitin sulfate and dermatan sulfate proteoglycans, such as DCN. Transfers D-xylose from UDP-D-xylose to specific serine residues of the core protein. Required for normal maturation of chondrocytes during bone development, normal onset of ossification and normal embryonic and postnatal skeleton development, especially of the long bones. The polypeptide is Xylosyltransferase 1 (Xylt1) (Rattus norvegicus (Rat)).